The primary structure comprises 532 residues: Nitrogenase molybdenum-iron protein alpha chain (532 aa).

3 residues coordinate [8Fe-7S] cluster: C62, C88, and C153. [7Fe-Mo-9S-C-homocitryl] cluster contacts are provided by C271 and H489.

Belongs to the NifD/NifK/NifE/NifN family. As to quaternary structure, tetramer of two alpha and two beta chains. Forms complex with the iron protein (nitrogenase component 2). Requires [8Fe-7S] cluster as cofactor. [7Fe-Mo-9S-C-homocitryl] cluster is required as a cofactor.

It carries out the reaction N2 + 8 reduced [2Fe-2S]-[ferredoxin] + 16 ATP + 16 H2O = H2 + 8 oxidized [2Fe-2S]-[ferredoxin] + 2 NH4(+) + 16 ADP + 16 phosphate + 6 H(+). In terms of biological role, this molybdenum-iron protein is part of the nitrogenase complex that catalyzes the key enzymatic reactions in nitrogen fixation. The chain is Nitrogenase molybdenum-iron protein alpha chain (nifD2) from Methanosarcina barkeri.